A 344-amino-acid chain; its full sequence is Lipase chaperone (344 aa).

The chain crosses the membrane as a helical span at residues 14-34 (AVVYGAVGLAAIAGVAMWSGA). The segment at 37 to 78 (HGGTGASGEPPDASAARGPAAAPPQAAVPASTSLPPSLAGSS) is disordered. The span at 43–78 (SGEPPDASAARGPAAAPPQAAVPASTSLPPSLAGSS) shows a compositional bias: low complexity.

This sequence belongs to the lipase chaperone family.

Its subcellular location is the cell inner membrane. Its function is as follows. May be involved in the folding of the extracellular lipase during its passage through the periplasm. The sequence is that of Lipase chaperone (lifO) from Burkholderia cepacia (Pseudomonas cepacia).